The chain runs to 270 residues: uncharacterized protein (270 aa).

One can recognise an HTH lysR-type domain in the interval 1–50; the sequence is LTEVVKAQSFTKAAENLYTSQPSISRDIKRLENDYDVKVFEFKHSKMTLT. Residues 10-29 constitute a DNA-binding region (H-T-H motif); the sequence is FTKAAENLYTSQPSISRDIK.

Belongs to the LysR transcriptional regulatory family.

This is an uncharacterized protein from Staphylococcus xylosus.